A 303-amino-acid chain; its full sequence is Probable 5-dehydro-4-deoxyglucarate dehydratase (303 aa).

It belongs to the DapA family.

It carries out the reaction 5-dehydro-4-deoxy-D-glucarate + H(+) = 2,5-dioxopentanoate + CO2 + H2O. Its pathway is carbohydrate acid metabolism; D-glucarate degradation; 2,5-dioxopentanoate from D-glucarate: step 2/2. The polypeptide is Probable 5-dehydro-4-deoxyglucarate dehydratase (Pseudomonas putida (strain W619)).